A 108-amino-acid chain; its full sequence is MQFTSVFTILAIAMTAAAAPAEVVPRATTIGPNTCSIDDYKPYCCQSMSGPAGSPGLLNLIPVDLSASLGCVVGVIGSQCGASVKCCKDDVTNTGNSFLIINAANCVA.

The first 26 residues, Met-1–Arg-26, serve as a signal peptide directing secretion. 4 disulfide bridges follow: Cys-35-Cys-86, Cys-44-Cys-80, Cys-45-Cys-71, and Cys-87-Cys-106.

The protein belongs to the fungal hydrophobin family. As to quaternary structure, self-assembles to form functional amyloid fibrils called rodlets. Self-assembly into fibrillar rodlets occurs spontaneously at hydrophobic:hydrophilic interfaces and the rodlets further associate laterally to form amphipathic monolayers.

Its subcellular location is the secreted. The protein localises to the spore wall. Functionally, aerial growth, conidiation, and dispersal of filamentous fungi in the environment rely upon a capability of their secreting small amphipathic proteins called hydrophobins (HPBs) with low sequence identity. Class I can self-assemble into an outermost layer of rodlet bundles on aerial cell surfaces, conferring cellular hydrophobicity that supports fungal growth, development and dispersal; whereas class II form highly ordered films at water-air interfaces through intermolecular interactions but contribute nothing to the rodlet structure. Eas is a class I hydrophobin that forms functional amyloid fibrils called rodlets that facilitate spore formation and dispersal. In Neurospora crassa (strain ATCC 24698 / 74-OR23-1A / CBS 708.71 / DSM 1257 / FGSC 987), this protein is Class I hydrophobin eas.